A 458-amino-acid chain; its full sequence is Estrogen-related receptor gamma (458 aa).

Residue lysine 40 forms a Glycyl lysine isopeptide (Lys-Gly) (interchain with G-Cter in SUMO) linkage. Polar residues predominate over residues 42 to 52 (EPSSPASLTDS). The segment at 42–85 (EPSSPASLTDSVNHHSPGGSSDASGSYSSTMNGHQNGLDSPPLY) is disordered. A Phosphoserine modification is found at serine 45. Residues 57–70 (SPGGSSDASGSYSS) show a composition bias toward low complexity. The nuclear receptor DNA-binding region spans 125–200 (KRLCLVCGDI…VGMLKEGVRL (76 aa)). 2 NR C4-type zinc fingers span residues 128–148 (CLVC…CEAC) and 164–188 (CPAT…FMKC). The 225-residue stretch at 233–457 (PYNKIVSHLL…KLFLEMLEAK (225 aa)) folds into the NR LBD domain.

The protein belongs to the nuclear hormone receptor family. NR3 subfamily. As to quaternary structure, homodimer. Binds TLE1, PNRC1 and PNRC2. Binds GRIP1. Interacts with NRIP1, NCOA1 and NCOR2. Acetylated by PCAF/KAT2 (in vitro). Post-translationally, sumoylation on Lys-40 is enhanced by phosphorylation at Ser-45 and represses transcriptional activity. In terms of processing, phosphorylation on Ser-45 enhances sumoylation on Lys-40 thus repressing transcriptional activity. Expressed in the heart, kidney, brain, lung, bone marrow, adrenal gland, trachea, spinal cord and thyroid gland.

It is found in the nucleus. Functionally, orphan receptor that acts as a transcription activator in the absence of bound ligand. Binds specifically to an estrogen response element and activates reporter genes controlled by estrogen response elements. Induces the expression of PERM1 in the skeletal muscle. This Homo sapiens (Human) protein is Estrogen-related receptor gamma (ESRRG).